Here is a 617-residue protein sequence, read N- to C-terminus: uncharacterized protein (617 aa).

Low complexity-rich tracts occupy residues 1–16 (MSKCATPTPSTSSNSS) and 36–45 (STTSSNGSNS). Residues 1-49 (MSKCATPTPSTSSNSSDEAKRSPQPMSRGFPQRNMSTTSSNGSNSPRHR) form a disordered region. Helical transmembrane passes span 219–239 (LMIGAAGGVGGVLIGLTGGLA), 262–282 (TAGAAVLGTTMGVAGAGFTGY), and 427–447 (PITLIGFSLGARVIFHCLLTM).

This sequence belongs to the TMCO4 family.

The protein localises to the membrane. This is an uncharacterized protein from Caenorhabditis elegans.